The chain runs to 91 residues: N.vectensis toxin 8 (91 aa).

Residues 1–26 (MNSLLKVAVVCLVMLVACFVPRVILT) form the signal peptide. 3 cysteine pairs are disulfide-bonded: cysteine 45/cysteine 76, cysteine 47/cysteine 67, and cysteine 60/cysteine 77.

In terms of tissue distribution, expressed in ectodermal gland cells.

Functionally, has toxic effects on zebrafish larvae. It causes contractile paralysis and twitching of the tail within 20 minutes, followed by death within 30 minutes. Does not show any toxicity when injected into arthropods (cherry shrimps or grass shrimps). The sequence is that of N.vectensis toxin 8 from Nematostella vectensis (Starlet sea anemone).